Here is a 327-residue protein sequence, read N- to C-terminus: S-adenosylmethionine/S-adenosylhomocysteine transporter (327 aa).

Helical transmembrane passes span 22-42, 53-73, 85-105, 114-134, 143-163, 165-185, 202-222, 240-260, 271-291, and 294-314; these read CDMA…SFAL, LFVT…LLLC, IMPI…LEFI, TACF…YVQL, LGGL…GGSE, VAEW…ATCL, SLSM…LSLI, LFLQ…YNLF, FLSF…WLLL, and SFPP…RLIY. The region spanning 34–157 is the EamA 1 domain; the sequence is FIWSSSFALS…LGLVSYLVYL (124 aa). The EamA 2 domain occupies 189–313; sequence GWTLLRKLGR…GFMVLGCRLI (125 aa).

Belongs to the drug/metabolite transporter (DMT) superfamily. 10 TMS drug/metabolite exporter (DME) (TC 2.A.7.3) family.

It is found in the cell membrane. Its activity is regulated as follows. CCCP treatment reduces SAM intracellular uptake by 50%. Functionally, transports S-adenosylmethionine (SAM) and S-adenosylhomocysteine (SAH). Allows bacteria to acquire SAM from the eukaryotic host cell and to likely remove the toxic by-product SAH. This chain is S-adenosylmethionine/S-adenosylhomocysteine transporter, found in Chlamydia trachomatis serovar L2 (strain ATCC VR-902B / DSM 19102 / 434/Bu).